Reading from the N-terminus, the 200-residue chain is NADH-quinone oxidoreductase subunit C (200 aa).

Belongs to the complex I 30 kDa subunit family. In terms of assembly, NDH-1 is composed of 14 different subunits. Subunits NuoB, C, D, E, F, and G constitute the peripheral sector of the complex.

Its subcellular location is the cell inner membrane. The catalysed reaction is a quinone + NADH + 5 H(+)(in) = a quinol + NAD(+) + 4 H(+)(out). In terms of biological role, NDH-1 shuttles electrons from NADH, via FMN and iron-sulfur (Fe-S) centers, to quinones in the respiratory chain. The immediate electron acceptor for the enzyme in this species is believed to be ubiquinone. Couples the redox reaction to proton translocation (for every two electrons transferred, four hydrogen ions are translocated across the cytoplasmic membrane), and thus conserves the redox energy in a proton gradient. The protein is NADH-quinone oxidoreductase subunit C of Burkholderia vietnamiensis (strain G4 / LMG 22486) (Burkholderia cepacia (strain R1808)).